The following is a 466-amino-acid chain: Mitochondrial-processing peptidase subunit beta (466 aa).

Position 73 (H73) interacts with Zn(2+). E76 (proton acceptor) is an active-site residue. Residues H77 and E153 each contribute to the Zn(2+) site.

It belongs to the peptidase M16 family. In terms of assembly, heterodimer of mppA (alpha) and mppB (beta) subunits, forming the mitochondrial processing protease (MPP) in which mppA is involved in substrate recognition and binding and mppB is the catalytic subunit. It depends on Zn(2+) as a cofactor.

It localises to the mitochondrion matrix. It catalyses the reaction Release of N-terminal transit peptides from precursor proteins imported into the mitochondrion, typically with Arg in position P2.. Its activity is regulated as follows. Binding to mppA is required for catalytic activity. In terms of biological role, catalytic subunit of the essential mitochondrial processing protease (MPP), which cleaves the mitochondrial sequence off newly imported precursors proteins. Preferentially, cleaves after an arginine at position P2. The chain is Mitochondrial-processing peptidase subunit beta (mppB) from Lentinula edodes (Shiitake mushroom).